We begin with the raw amino-acid sequence, 119 residues long: Parathyroid hormone (119 aa).

Positions 1 to 25 are cleaved as a signal peptide; sequence MTSTKNLAKAIVILYAICFFTNSDG. Positions 26–31 are excised as a propeptide; it reads RPMMKR.

It belongs to the parathyroid hormone family. As to quaternary structure, interacts with PTH1R (via N-terminal extracellular domain).

It is found in the secreted. Its function is as follows. Parathyroid hormone elevates calcium level by dissolving the salts in bone and preventing their renal excretion. Acts by binding to its receptor, PTH1R, activating G protein-coupled receptor signaling. Stimulates [1-14C]-2-deoxy-D-glucose (2DG) transport and glycogen synthesis in osteoblastic cells. This is Parathyroid hormone from Gallus gallus (Chicken).